The chain runs to 349 residues: Protein pelota homolog (349 aa).

The protein belongs to the eukaryotic release factor 1 family. Pelota subfamily. As to quaternary structure, monomer. A divalent metal cation serves as cofactor.

The protein resides in the cytoplasm. Functionally, may function in recognizing stalled ribosomes, interact with stem-loop structures in stalled mRNA molecules, and effect endonucleolytic cleavage of the mRNA. May play a role in the release non-functional ribosomes and degradation of damaged mRNAs. Has endoribonuclease activity. In Nitrosopumilus maritimus (strain SCM1), this protein is Protein pelota homolog.